Reading from the N-terminus, the 200-residue chain is UPF0301 protein BR0480/BS1330_I0481 (200 aa).

It belongs to the UPF0301 (AlgH) family.

The polypeptide is UPF0301 protein BR0480/BS1330_I0481 (Brucella suis biovar 1 (strain 1330)).